Here is a 483-residue protein sequence, read N- to C-terminus: UDP-N-acetylmuramate--L-alanine ligase (483 aa).

An ATP-binding site is contributed by 112–118 (GTHGKTT).

It belongs to the MurCDEF family.

It is found in the cytoplasm. The catalysed reaction is UDP-N-acetyl-alpha-D-muramate + L-alanine + ATP = UDP-N-acetyl-alpha-D-muramoyl-L-alanine + ADP + phosphate + H(+). It participates in cell wall biogenesis; peptidoglycan biosynthesis. In terms of biological role, cell wall formation. The chain is UDP-N-acetylmuramate--L-alanine ligase from Ralstonia pickettii (strain 12J).